The following is a 64-amino-acid chain: Small ribosomal subunit protein eS17 (64 aa).

This sequence belongs to the eukaryotic ribosomal protein eS17 family.

This Methanococcoides burtonii (strain DSM 6242 / NBRC 107633 / OCM 468 / ACE-M) protein is Small ribosomal subunit protein eS17.